The sequence spans 1711 residues: Receptor-type tyrosine-protein phosphatase V (1711 aa).

A signal peptide spans 1-17; the sequence is MRPLILLAALLWLQGFL. Over 18-1074 the chain is Extracellular; it reads AEDDACSSLE…SEPRASISLA (1057 aa). Fibronectin type-III domains follow at residues 37 to 129, 130 to 222, 218 to 305, 306 to 391, 393 to 470, 475 to 569, 565 to 654, 655 to 749, 744 to 831, and 832 to 926; these read PLLS…TAPT, VVRG…VPPD, PVPP…EWTY, PSYP…LAES, ALPR…ISGY, PPQS…APPT, PAPP…TGWT, PPSA…IPNE, PLIP…VLSV, and EPGP…SAEA. N-linked (GlcNAc...) asparagine glycosylation is found at Asn42, Asn74, Asn89, Asn117, Asn174, Asn239, and Asn259. An N-linked (GlcNAc...) asparagine glycan is attached at Asn431. N-linked (GlcNAc...) asparagine glycosylation is found at Asn570, Asn620, Asn649, Asn663, and Asn737. 4 N-linked (GlcNAc...) asparagine glycosylation sites follow: Asn851, Asn882, Asn970, and Asn982. The helical transmembrane segment at 1075-1095 threads the bilayer; it reads IIPLTVMLGAVVGSIVIVCAV. Topologically, residues 1096 to 1711 are cytoplasmic; it reads LCLLRWRCLK…PRAGKWPAPC (616 aa). 2 Tyrosine-protein phosphatase domains span residues 1150–1409 and 1427–1696; these read FFQE…LLNK and DFAQ…LNSA. Residues Asp1316, 1350–1356, and Gln1394 contribute to the substrate site; that span reads CSAGVGR. The active-site Phosphocysteine intermediate is the Cys1350.

The protein belongs to the protein-tyrosine phosphatase family. Receptor class 3 subfamily. The cytoplasmic domain contains potential phosphorylation sites. Bone and testis. In the latter, restricted to the basal portion of the seminiferous tubule.

Its subcellular location is the membrane. It catalyses the reaction O-phospho-L-tyrosyl-[protein] + H2O = L-tyrosyl-[protein] + phosphate. Its function is as follows. Protein tyrosine phosphatase that acts as a regulator of energy metabolism. Prevents decarboxylation of osteocalcin (Bglap) via an indirect mechanism, preventing the hormone activity of osteocalcin. Functions in signaling pathways during bone remodeling, as well as serve a broader role in cell interactions associated with differentiation in bone and testis. Associated with differentiation in bone and testis. In Rattus norvegicus (Rat), this protein is Receptor-type tyrosine-protein phosphatase V (Ptprv).